The following is a 505-amino-acid chain: Glutamate--tRNA ligase (505 aa).

Positions 12–22 match the 'HIGH' region motif; it reads PSPTGALHIGG. The 'KMSKS' region signature appears at 260-264; sequence KLSKR. Residue lysine 263 coordinates ATP.

It belongs to the class-I aminoacyl-tRNA synthetase family. Glutamate--tRNA ligase type 1 subfamily. In terms of assembly, monomer.

The protein localises to the cytoplasm. It carries out the reaction tRNA(Glu) + L-glutamate + ATP = L-glutamyl-tRNA(Glu) + AMP + diphosphate. In terms of biological role, catalyzes the attachment of glutamate to tRNA(Glu) in a two-step reaction: glutamate is first activated by ATP to form Glu-AMP and then transferred to the acceptor end of tRNA(Glu). The polypeptide is Glutamate--tRNA ligase (Phocaeicola vulgatus (strain ATCC 8482 / DSM 1447 / JCM 5826 / CCUG 4940 / NBRC 14291 / NCTC 11154) (Bacteroides vulgatus)).